A 170-amino-acid polypeptide reads, in one-letter code: Arginine repressor (170 aa).

Belongs to the ArgR family.

The protein resides in the cytoplasm. It functions in the pathway amino-acid biosynthesis; L-arginine biosynthesis [regulation]. Functionally, regulates arginine biosynthesis genes. The protein is Arginine repressor of Bifidobacterium longum (strain NCC 2705).